We begin with the raw amino-acid sequence, 115 residues long: UPF0295 protein BPUM_0828 (115 aa).

A run of 2 helical transmembrane segments spans residues 13–33 and 41–61; these read TFAL…VFFK and FFML…FWIG.

This sequence belongs to the UPF0295 family.

The protein localises to the cell membrane. This chain is UPF0295 protein BPUM_0828, found in Bacillus pumilus (strain SAFR-032).